We begin with the raw amino-acid sequence, 597 residues long: Elongation factor 4 (597 aa).

The region spanning 2 to 184 is the tr-type G domain; the sequence is QHIRNFSIIA…AIVARVPSPE (183 aa). Residues 14 to 19 and 131 to 134 contribute to the GTP site; these read DHGKST and NKMD.

This sequence belongs to the TRAFAC class translation factor GTPase superfamily. Classic translation factor GTPase family. LepA subfamily.

It is found in the cell inner membrane. The catalysed reaction is GTP + H2O = GDP + phosphate + H(+). Functionally, required for accurate and efficient protein synthesis under certain stress conditions. May act as a fidelity factor of the translation reaction, by catalyzing a one-codon backward translocation of tRNAs on improperly translocated ribosomes. Back-translocation proceeds from a post-translocation (POST) complex to a pre-translocation (PRE) complex, thus giving elongation factor G a second chance to translocate the tRNAs correctly. Binds to ribosomes in a GTP-dependent manner. This chain is Elongation factor 4, found in Bordetella avium (strain 197N).